A 1003-amino-acid chain; its full sequence is MADRVLVIGSGGREHALAWKLAQSPHVKQVFVAPGNAGTANSGKISNSAVSVSNHAALAQFCRDQEIRLVVVGPEVPLAAGIVDDLTAAGVRCFGPTARAAQLESSKSFTKSFLDRHGIPTARWKSFTDPKAACSFINSANFPALVVKASGLAAGKGVIVASNKEEACKAVNDIMQDKTFGTAGETVVVEELLEGEEVSCLCFTDGVTIAPMPPAQDHKRLKDGDEGPNTGGMGAYSPAPQISKDLLLKIRETVLQKTLDGMRKEGIPYLGVLYAGLMLTKDGPKVLEFNCRFGDPECQVILPLLKSDLYEVMQAVINKKLSSSMPIWYEDSAAVTVVMASEGYPGTYPKGLEITGLSKAKELGLEVFHAGTALKDGKVVTNGGRVLTVTAIKEDLMTALQEANKGVAAINFKGSIYRKDIGYRAIAFLSQSRGLTYKNSGVDIAAGNILVQKIKPLAAATSRSGCNAELGGFAGLFDLKAAGYKDPILVSGTDGVGTKLKIAQVCKKHDTIGQDLVAMCVNDILAQGAEPLFFLDYFACGKLDVEVAQGVIAGIAEACQKAGCALLGGETAEMPGMYPPGEYDLAGFAVGAVERGQMLPQLERIADGDVVIGVASSGVHSNGYSLVRRIVEKSSLDFSSQVGVSGDQTLGDLLLTPTKIYSKTLLPVLRSGHVKAYAHITGGGLLENIPRVLPDSFGVVLDALSWKIPEIFCWLHKEGNLSEEEMARTFNCGIGAVLVVQKELAQQVLKDVQKHEAAWLIGKVVPLQKGSAHVKVHNLLQALQANRSLSVHSHIQGKIQTNKVKVAVLISGTGTNLEALINSTKKPTSFAEIVLVVSNKAGVEGLRKAERAGIPTRVIDHKQYGSRTEFDSAVDRVLEEFSVELICLAGFMRILSGPFVKKWEGKILNIHPSLLPSFKGANAHKLVLEAGVRVTGCTVHFVAEEVDAGAIIFQEAVPVKIGDTVETLSERVKEAEHRAFPAALQLVASGAVQVGEAGKICWK.

The region spanning 111 to 318 (KSFLDRHGIP…LYEVMQAVIN (208 aa)) is the ATP-grasp domain. Residues 190-193 (EELL), glutamate 197, arginine 220, and asparagine 229 contribute to the ATP site. The segment at 214 to 235 (PAQDHKRLKDGDEGPNTGGMGA) is disordered. Basic and acidic residues predominate over residues 216–225 (QDHKRLKDGD). Residues glutamate 288 and asparagine 290 each contribute to the Mg(2+) site. The segment at 434–805 (GLTYKNSGVD…QGKIQTNKVK (372 aa)) is AIRS domain. The tract at residues 806–1003 (VAVLISGTGT…VGEAGKICWK (198 aa)) is GART domain. N(1)-(5-phospho-beta-D-ribosyl)glycinamide is bound at residue 814-816 (GTN). Residues arginine 867, 892–895 (MRIL), and asparagine 909 contribute to the (6R)-10-formyltetrahydrofolate site. Histidine 911 functions as the Proton donor in the catalytic mechanism. 943-947 (AEEVD) is a binding site for (6R)-10-formyltetrahydrofolate. 973–976 (KEAE) lines the N(1)-(5-phospho-beta-D-ribosyl)glycinamide pocket.

In the N-terminal section; belongs to the GARS family. It in the central section; belongs to the AIR synthase family. The protein in the C-terminal section; belongs to the GART family. Homodimer. Requires Mg(2+) as cofactor. It depends on Mn(2+) as a cofactor.

It catalyses the reaction 5-phospho-beta-D-ribosylamine + glycine + ATP = N(1)-(5-phospho-beta-D-ribosyl)glycinamide + ADP + phosphate + H(+). The catalysed reaction is 2-formamido-N(1)-(5-O-phospho-beta-D-ribosyl)acetamidine + ATP = 5-amino-1-(5-phospho-beta-D-ribosyl)imidazole + ADP + phosphate + H(+). The enzyme catalyses N(1)-(5-phospho-beta-D-ribosyl)glycinamide + (6R)-10-formyltetrahydrofolate = N(2)-formyl-N(1)-(5-phospho-beta-D-ribosyl)glycinamide + (6S)-5,6,7,8-tetrahydrofolate + H(+). Its pathway is purine metabolism; IMP biosynthesis via de novo pathway; 5-amino-1-(5-phospho-D-ribosyl)imidazole from N(2)-formyl-N(1)-(5-phospho-D-ribosyl)glycinamide: step 2/2. It participates in purine metabolism; IMP biosynthesis via de novo pathway; N(1)-(5-phospho-D-ribosyl)glycinamide from 5-phospho-alpha-D-ribose 1-diphosphate: step 2/2. The protein operates within purine metabolism; IMP biosynthesis via de novo pathway; N(2)-formyl-N(1)-(5-phospho-D-ribosyl)glycinamide from N(1)-(5-phospho-D-ribosyl)glycinamide (10-formyl THF route): step 1/1. Its function is as follows. Trifunctional enzyme that catalyzes three distinct reactions as part of the 'de novo' inosine monophosphate biosynthetic pathway. This chain is Trifunctional purine biosynthetic protein adenosine-3 (GART), found in Gallus gallus (Chicken).